Reading from the N-terminus, the 68-residue chain is ATP synthase subunit c (68 aa).

2 consecutive transmembrane segments (helical) span residues 5-25 (AAAI…GMIV) and 47-67 (FIGV…AFMV).

The protein belongs to the ATPase C chain family. F-type ATPases have 2 components, F(1) - the catalytic core - and F(0) - the membrane proton channel. F(1) has five subunits: alpha(3), beta(3), gamma(1), delta(1), epsilon(1). F(0) has three main subunits: a(1), b(2) and c(10-14). The alpha and beta chains form an alternating ring which encloses part of the gamma chain. F(1) is attached to F(0) by a central stalk formed by the gamma and epsilon chains, while a peripheral stalk is formed by the delta and b chains.

It localises to the cell membrane. In terms of biological role, f(1)F(0) ATP synthase produces ATP from ADP in the presence of a proton or sodium gradient. F-type ATPases consist of two structural domains, F(1) containing the extramembraneous catalytic core and F(0) containing the membrane proton channel, linked together by a central stalk and a peripheral stalk. During catalysis, ATP synthesis in the catalytic domain of F(1) is coupled via a rotary mechanism of the central stalk subunits to proton translocation. Its function is as follows. Key component of the F(0) channel; it plays a direct role in translocation across the membrane. A homomeric c-ring of between 10-14 subunits forms the central stalk rotor element with the F(1) delta and epsilon subunits. This Oceanobacillus iheyensis (strain DSM 14371 / CIP 107618 / JCM 11309 / KCTC 3954 / HTE831) protein is ATP synthase subunit c.